A 293-amino-acid chain; its full sequence is Putative serine protease 42 (293 aa).

The first 26 residues, 1–26 (MSSGGGSRGLLAWLLLLQPWPGQNWA), serve as a signal peptide directing secretion. The interval 33–60 (LPSPLLSEEGGENPEASPAPGPEAGPPL) is disordered. Residues 80–293 (IVGGVDAEEG…IVSWGIGCGR (214 aa)) enclose the Peptidase S1 domain. Cysteines 105 and 121 form a disulfide. The active-site Charge relay system is the H120. A glycan (N-linked (GlcNAc...) asparagine) is linked at N141. D166 serves as the catalytic Charge relay system. The N-linked (GlcNAc...) asparagine glycan is linked to N177. Disulfide bonds link C200–C273, C232–C253, and C263–C291. S267 serves as the catalytic Charge relay system. An N-linked (GlcNAc...) asparagine glycan is attached at N276.

Belongs to the peptidase S1 family.

Its subcellular location is the cytoplasm. The protein localises to the cell membrane. In terms of biological role, plays a role in spermatogenesis. Involved in germ cell survival during meiosis. This is Putative serine protease 42 from Homo sapiens (Human).